A 160-amino-acid polypeptide reads, in one-letter code: Probable NADH dehydrogenase [ubiquinone] 1 beta subcomplex subunit 2, mitochondrial (160 aa).

Belongs to the complex I NDUFB2 subunit family. As to quaternary structure, complex I is composed of 45 different subunits.

It localises to the mitochondrion inner membrane. Its function is as follows. Accessory subunit of the mitochondrial membrane respiratory chain NADH dehydrogenase (Complex I), that is believed not to be involved in catalysis. Complex I functions in the transfer of electrons from NADH to the respiratory chain. The immediate electron acceptor for the enzyme is believed to be ubiquinone. This is Probable NADH dehydrogenase [ubiquinone] 1 beta subcomplex subunit 2, mitochondrial from Caenorhabditis elegans.